Here is a 382-residue protein sequence, read N- to C-terminus: Anhydro-N-acetylmuramic acid kinase (382 aa).

9–16 lines the ATP pocket; that stretch reads GTSLDGID.

The protein belongs to the anhydro-N-acetylmuramic acid kinase family.

It catalyses the reaction 1,6-anhydro-N-acetyl-beta-muramate + ATP + H2O = N-acetyl-D-muramate 6-phosphate + ADP + H(+). Its pathway is amino-sugar metabolism; 1,6-anhydro-N-acetylmuramate degradation. It participates in cell wall biogenesis; peptidoglycan recycling. In terms of biological role, catalyzes the specific phosphorylation of 1,6-anhydro-N-acetylmuramic acid (anhMurNAc) with the simultaneous cleavage of the 1,6-anhydro ring, generating MurNAc-6-P. Is required for the utilization of anhMurNAc either imported from the medium or derived from its own cell wall murein, and thus plays a role in cell wall recycling. This chain is Anhydro-N-acetylmuramic acid kinase, found in Bacillus cereus (strain AH187).